The sequence spans 732 residues: Catalase-peroxidase (732 aa).

Positions 1 to 10 are enriched in basic and acidic residues; it reads MDAKTDDKAG. Residues 1-26 are disordered; it reads MDAKTDDKAGKCPVAHGPAPRGNRDW. A cross-link (tryptophyl-tyrosyl-methioninium (Trp-Tyr) (with M-243)) is located at residues 95–217; that stretch reads WHSAGTYRTT…LGAVQMGLIY (123 aa). The active-site Proton acceptor is the H96. The tryptophyl-tyrosyl-methioninium (Tyr-Met) (with W-95) cross-link spans 217–243; the sequence is YVNPEGPNGNPDPLGSAKDIRETFARM. Residue H258 participates in heme b binding.

The protein belongs to the peroxidase family. Peroxidase/catalase subfamily. Homodimer or homotetramer. Requires heme b as cofactor. Post-translationally, formation of the three residue Trp-Tyr-Met cross-link is important for the catalase, but not the peroxidase activity of the enzyme.

It carries out the reaction H2O2 + AH2 = A + 2 H2O. It catalyses the reaction 2 H2O2 = O2 + 2 H2O. Functionally, bifunctional enzyme with both catalase and broad-spectrum peroxidase activity. The protein is Catalase-peroxidase of Rhodopseudomonas palustris (strain BisB18).